The sequence spans 146 residues: ATP synthase F(0) complex subunit C2, mitochondrial (146 aa).

Residues 1 to 71 (MYACSKFVST…RSFQTSAISR (71 aa)) constitute a mitochondrion transit peptide. Residues 87 to 107 (VGVAGSGAGIGTVFGSLIIGY) traverse the membrane as a helical segment. Position 114 is an N6,N6,N6-trimethyllysine (lysine 114). The helical transmembrane segment at 122 to 142 (ILGFALSEAMGLFCLMVAFLI) threads the bilayer.

It belongs to the ATPase C chain family. F-type ATPases have 2 components, CF(1) - the catalytic core - and CF(0) - the membrane proton channel. CF(1) has five subunits: alpha(3), beta(3), gamma(1), delta(1), epsilon(1). CF(0) has three main subunits: a, b and c. Interacts with DNAJC30; interaction is direct. Post-translationally, trimethylated by ATPSCKMT at Lys-114. Methylation is required for proper incorporation of the C subunit into the ATP synthase complex and mitochondrial respiration.

Its subcellular location is the mitochondrion membrane. Its function is as follows. Mitochondrial membrane ATP synthase (F(1)F(0) ATP synthase or Complex V) produces ATP from ADP in the presence of a proton gradient across the membrane which is generated by electron transport complexes of the respiratory chain. F-type ATPases consist of two structural domains, F(1) - containing the extramembraneous catalytic core and F(0) - containing the membrane proton channel, linked together by a central stalk and a peripheral stalk. During catalysis, ATP synthesis in the catalytic domain of F(1) is coupled via a rotary mechanism of the central stalk subunits to proton translocation. Part of the complex F(0) domain. A homomeric c-ring of probably 10 subunits is part of the complex rotary element. This Mus musculus (Mouse) protein is ATP synthase F(0) complex subunit C2, mitochondrial.